Here is a 78-residue protein sequence, read N- to C-terminus: Delta-conotoxin-like Ai6.1 (78 aa).

The N-terminal stretch at 1-22 (MKLTCVMIVAVLFLTAWTFATA) is a signal peptide. Residues 23–49 (DDPRNGLGNLFSNAHHEMKNPEASKLN) constitute a propeptide that is removed on maturation. Cystine bridges form between cysteine 53-cysteine 68, cysteine 60-cysteine 72, and cysteine 67-cysteine 77.

It belongs to the conotoxin O1 superfamily. As to expression, expressed by the venom duct.

It localises to the secreted. Delta-conotoxins bind to site 6 of voltage-gated sodium channels (Nav) and inhibit the inactivation process. This is Delta-conotoxin-like Ai6.1 from Conus ammiralis (Admiral cone).